We begin with the raw amino-acid sequence, 75 residues long: Kappa-conotoxin RIIIK (75 aa).

An N-terminal signal peptide occupies residues Met-1–Ala-19. Positions Leu-20 to Arg-50 are excised as a propeptide. 4-hydroxyproline occurs at positions 52, 63, 65, and 71. Intrachain disulfides connect Cys-54/Cys-67, Cys-55/Cys-72, and Cys-62/Cys-73. Thr-74 is modified (threonine amide).

Belongs to the conotoxin M superfamily. As to expression, expressed by the venom duct.

It is found in the secreted. Its function is as follows. Kappa-conotoxins inhibits voltage-gated potassium channels (Kv). This synthetic toxin reversibly inhibits the insect potassium channel Shaker K+, the teleost homolog TSha1 and the mammalian Kv1.2/KCNA2 channel. Interacts with the pore region of the insect channel, in a state-dependent manner. Causes seizure when intracerebrovascularly injected into mice. Is also toxic when intrathecally injected into mice, but shows no visible effects by intraperitoneal injection. Shows protective effects on cardiac tissue when administered after an ischemic event. This Conus radiatus (Rayed cone) protein is Kappa-conotoxin RIIIK.